Consider the following 930-residue polypeptide: Isoleucine--tRNA ligase (930 aa).

Positions 57 to 67 (PYANGNIHVGH) match the 'HIGH' region motif. Residue glutamate 554 coordinates L-isoleucyl-5'-AMP. The 'KMSKS' region signature appears at 595-599 (KMSKS). Lysine 598 provides a ligand contact to ATP. Zn(2+) is bound by residues cysteine 888, cysteine 891, cysteine 908, and cysteine 911.

This sequence belongs to the class-I aminoacyl-tRNA synthetase family. IleS type 1 subfamily. In terms of assembly, monomer. Requires Zn(2+) as cofactor.

It localises to the cytoplasm. The catalysed reaction is tRNA(Ile) + L-isoleucine + ATP = L-isoleucyl-tRNA(Ile) + AMP + diphosphate. Its function is as follows. Catalyzes the attachment of isoleucine to tRNA(Ile). As IleRS can inadvertently accommodate and process structurally similar amino acids such as valine, to avoid such errors it has two additional distinct tRNA(Ile)-dependent editing activities. One activity is designated as 'pretransfer' editing and involves the hydrolysis of activated Val-AMP. The other activity is designated 'posttransfer' editing and involves deacylation of mischarged Val-tRNA(Ile). The chain is Isoleucine--tRNA ligase from Streptococcus sanguinis (strain SK36).